The chain runs to 58 residues: Small ribosomal subunit protein bS21 (58 aa).

The protein belongs to the bacterial ribosomal protein bS21 family.

This chain is Small ribosomal subunit protein bS21, found in Synechococcus sp. (strain CC9605).